A 369-amino-acid polypeptide reads, in one-letter code: 2-aminoethylphosphonate--pyruvate transaminase (369 aa).

N6-(pyridoxal phosphate)lysine is present on K193.

The protein belongs to the class-V pyridoxal-phosphate-dependent aminotransferase family. PhnW subfamily. As to quaternary structure, homodimer. Pyridoxal 5'-phosphate serves as cofactor.

The enzyme catalyses (2-aminoethyl)phosphonate + pyruvate = phosphonoacetaldehyde + L-alanine. Its function is as follows. Involved in phosphonate degradation. The polypeptide is 2-aminoethylphosphonate--pyruvate transaminase (Burkholderia pseudomallei (strain 668)).